Here is a 185-residue protein sequence, read N- to C-terminus: Ribosome-recycling factor (185 aa).

It belongs to the RRF family.

It is found in the cytoplasm. Its function is as follows. Responsible for the release of ribosomes from messenger RNA at the termination of protein biosynthesis. May increase the efficiency of translation by recycling ribosomes from one round of translation to another. The polypeptide is Ribosome-recycling factor (Coxiella burnetii (strain RSA 493 / Nine Mile phase I)).